The sequence spans 565 residues: NAD-dependent malic enzyme (565 aa).

The active-site Proton donor is the tyrosine 104. An NAD(+)-binding site is contributed by arginine 157. Lysine 175 functions as the Proton acceptor in the catalytic mechanism. A divalent metal cation contacts are provided by glutamate 246, aspartate 247, and aspartate 270. NAD(+)-binding residues include aspartate 270 and asparagine 418.

Belongs to the malic enzymes family. As to quaternary structure, homotetramer. Requires Mg(2+) as cofactor. The cofactor is Mn(2+).

It catalyses the reaction (S)-malate + NAD(+) = pyruvate + CO2 + NADH. The enzyme catalyses oxaloacetate + H(+) = pyruvate + CO2. The sequence is that of NAD-dependent malic enzyme from Salmonella arizonae (strain ATCC BAA-731 / CDC346-86 / RSK2980).